A 132-amino-acid polypeptide reads, in one-letter code: Interferon-induced transmembrane protein 5 (132 aa).

Residues 1–11 show a composition bias toward basic and acidic residues; the sequence is MDTAYPREDTR. The segment at 1–21 is disordered; the sequence is MDTAYPREDTRAPTPSKAGAH. Over 1-36 the chain is Extracellular; that stretch reads MDTAYPREDTRAPTPSKAGAHTALTLGAPHPPPRDH. A helical transmembrane segment spans residues 37–57; that stretch reads LIWSVFSTLYLNLCCLGFLAL. Residues cysteine 50, cysteine 51, and cysteine 84 are each lipidated (S-palmitoyl cysteine). The Cytoplasmic segment spans residues 58-86; sequence AYSIKARDQKVVGDLEAARRFGSKAKCYN. Residues 87–107 traverse the membrane as a helical segment; the sequence is ILAAMWTLVPPLLLLGLVVTG. Residues 108-132 are Extracellular-facing; it reads ALHLARLAKDSAAFFSTKFDDADYD.

It belongs to the CD225/Dispanin family. In terms of assembly, interacts with FKBP11. Post-translationally, palmitoylated. In terms of tissue distribution, detected in osteoblasts and fibroblasts (at protein level). Detected in bone.

Its subcellular location is the cell membrane. Its function is as follows. Required for normal bone mineralization. The protein is Interferon-induced transmembrane protein 5 (IFITM5) of Homo sapiens (Human).